The following is a 362-amino-acid chain: Heme A synthase (362 aa).

The next 5 membrane-spanning stretches (helical) occupy residues Val-15–Ala-35, Val-104–Pro-124, Ala-129–Ala-149, Val-161–Leu-181, and Ala-200–Leu-220. His-264 provides a ligand contact to heme. 3 helical membrane passes run Met-266–Ala-285, Gly-293–Leu-313, and Val-316–Val-336. His-324 lines the heme pocket.

Belongs to the COX15/CtaA family. Type 2 subfamily. In terms of assembly, interacts with CtaB. The cofactor is heme b.

It is found in the cell membrane. The catalysed reaction is Fe(II)-heme o + 2 A + H2O = Fe(II)-heme a + 2 AH2. It functions in the pathway porphyrin-containing compound metabolism; heme A biosynthesis; heme A from heme O: step 1/1. In terms of biological role, catalyzes the conversion of heme O to heme A by two successive hydroxylations of the methyl group at C8. The first hydroxylation forms heme I, the second hydroxylation results in an unstable dihydroxymethyl group, which spontaneously dehydrates, resulting in the formyl group of heme A. The chain is Heme A synthase from Rhodopseudomonas palustris (strain BisB5).